A 357-amino-acid chain; its full sequence is Probable dual-specificity RNA methyltransferase RlmN (357 aa).

Glu95 (proton acceptor) is an active-site residue. In terms of domain architecture, Radical SAM core spans 105–343 (KKSSYTLCLS…VSIREERGSD (239 aa)). An intrachain disulfide couples Cys112 to Cys348. [4Fe-4S] cluster-binding residues include Cys119, Cys123, and Cys126. S-adenosyl-L-methionine is bound by residues 174 to 175 (GE), Ser206, 229 to 231 (SLH), and Asn305. Residue Cys348 is the S-methylcysteine intermediate of the active site.

The protein belongs to the radical SAM superfamily. RlmN family. [4Fe-4S] cluster serves as cofactor.

It localises to the cytoplasm. It catalyses the reaction adenosine(2503) in 23S rRNA + 2 reduced [2Fe-2S]-[ferredoxin] + 2 S-adenosyl-L-methionine = 2-methyladenosine(2503) in 23S rRNA + 5'-deoxyadenosine + L-methionine + 2 oxidized [2Fe-2S]-[ferredoxin] + S-adenosyl-L-homocysteine. It carries out the reaction adenosine(37) in tRNA + 2 reduced [2Fe-2S]-[ferredoxin] + 2 S-adenosyl-L-methionine = 2-methyladenosine(37) in tRNA + 5'-deoxyadenosine + L-methionine + 2 oxidized [2Fe-2S]-[ferredoxin] + S-adenosyl-L-homocysteine. In terms of biological role, specifically methylates position 2 of adenine 2503 in 23S rRNA and position 2 of adenine 37 in tRNAs. The protein is Probable dual-specificity RNA methyltransferase RlmN of Syntrophomonas wolfei subsp. wolfei (strain DSM 2245B / Goettingen).